A 673-amino-acid chain; its full sequence is DNA ligase (673 aa).

Residue 34 to 38 (DAAFD) coordinates NAD(+). The segment at 54-73 (LRRPDSPTQRVGGATAPDFA) is disordered. NAD(+)-binding positions include 83–84 (SL) and E114. K116 functions as the N6-AMP-lysine intermediate in the catalytic mechanism. NAD(+) contacts are provided by R137, E176, K292, and K316. 4 residues coordinate Zn(2+): C410, C413, C428, and C433. In terms of domain architecture, BRCT spans 594-673 (PAEGPLAGMT…DEFCERYLQG (80 aa)).

Belongs to the NAD-dependent DNA ligase family. LigA subfamily. Requires Mg(2+) as cofactor. Mn(2+) serves as cofactor.

It carries out the reaction NAD(+) + (deoxyribonucleotide)n-3'-hydroxyl + 5'-phospho-(deoxyribonucleotide)m = (deoxyribonucleotide)n+m + AMP + beta-nicotinamide D-nucleotide.. Functionally, DNA ligase that catalyzes the formation of phosphodiester linkages between 5'-phosphoryl and 3'-hydroxyl groups in double-stranded DNA using NAD as a coenzyme and as the energy source for the reaction. It is essential for DNA replication and repair of damaged DNA. The protein is DNA ligase of Symbiobacterium thermophilum (strain DSM 24528 / JCM 14929 / IAM 14863 / T).